Reading from the N-terminus, the 1205-residue chain is MGNLKSVGQEPGPPCGLGLGLGFGLCGKQGPASPAPEPSWAPAPATPQAPDHSPAPSSPTLTRPPEGPKFPRVKNWELGSITYDTLCAQSQQDGPCTPRRCLGSLVLPRKLQTRPSQGPPPAEQLLSQARDFINQYYSSIKRSGSQAHEERLQEVEAEVASTGTYHLRESELVFGAKQAWRNAPRCVGRIQWGKLQVFDARDCSSAQEMFTYICNHIKYATNRGNLRLSAITVFPQRTPGRGDFRIWNTQLVRYAGYRQQDGSVRGDPANVEITELCIQHGWSPGNGRFDVLPLLLQAPDEAPELFVLPPELVLEVPLEHPTLEWFAALGLRWYALPAVSNMLLEIGGLEFPAAPFSGWYMSTEIGTRNLCDPHRYNILEDVAVCMDLDTRTTSSMWKDKAAVEINLAVLHSFQPPKVTIVDHHAATVSFMKHLENEQKARGGCPADWAWIVPPISGSLTPVFHQEMVNYVLSPAFRYQPDPWKGSAAKGAGITRKKTFKEVANAVKISASLMGTLMAKRVKATILYASETGRAQSYAQQLGRLFRKAFDPRVLCMDEYDVVSLEHEALVLVVTSTFGNGDPPENGESFAAALMEMSGPYNSSPRPEQHRSYKIRFNSVSCSDPLVSSWRRKRKESSNTDSAGALGTLRFCVFGLGSRAYPHFCAFARAVDTRLEELGGERLGQLGQGGELRGQGEGFRGWGEGASRNAASCETFCVGEEAKAAAQDIFSPKRSWKRQRYRLSTQAEGLQLLPGLIHVHRRKMFQATVLSVENLQSSKSTRATILVRLDTAGQEGLQYQPGDHISPHPPPRSSHRPGQGGPRVAPFSERPLMPRTPPPGGPPPSWVRDPRLPPCTLRQALTFFLDITSPPSPRLLRLLSTLAEEPSEQQELETLSQDPRRYEEWKWFRCPTLLEVLEQFPSVALPAPLLLTQLPLLQPRYYSVSSAPSAHPGEVHLTVAVLALDTSRLCSPLHPAEVVKSGGVWGDKGGLTEGVLARAPSFRLPPDPYVPCILVGPGTGIAPFRGFWQERLHDIESKGLQRAAPTLVFGCRCSQLDHLYRDEVQDAQERGVFGRVLTAFSREPDSPKTYVQDILRTELAAEVHRVLCLERGHMFVCGDVTMATSVLQTVPRILATEGGMELDEAGDVIGVLRDQQRYHEDIFGLTLRTQEVTSRIRTQSFSLQERHLRGAVPWAFDPPGPDTPGP.

Disordered regions lie at residues 1–20 and 26–73; these read MGNLKSVGQEPGPPCGLGLG and CGKQ…FPRV. Residues 33-47 show a composition bias toward pro residues; it reads SPAPEPSWAPAPATP. Residues C96 and C101 each contribute to the Zn(2+) site. An interaction with NOSIP region spans residues 100–489; the sequence is RCLGSLVLPR…PDPWKGSAAK (390 aa). S104 is a (6R)-L-erythro-5,6,7,8-tetrahydrobiopterin binding site. S116 bears the Phosphoserine mark. C186 contributes to the heme b binding site. The L-arginine site is built by Q250, W359, Y360, and E364. R368 is a (6R)-L-erythro-5,6,7,8-tetrahydrobiopterin binding site. L-arginine is bound at residue N369. (6R)-L-erythro-5,6,7,8-tetrahydrobiopterin-binding residues include A449, W450, and F463. Y478 serves as a coordination point for heme b. A Phosphothreonine modification is found at T498. S529, E530, T531, R533, S575, and T576 together coordinate FMN. Residues S618, S636, and S641 each carry the phosphoserine modification. Residues S657, C664, E690, and Q694 each coordinate FMN. NADP(+) is bound at residue R781. Residues 796–850 are disordered; sequence LQYQPGDHISPHPPPRSSHRPGQGGPRVAPFSERPLMPRTPPPGGPPPSWVRDPR. Position 803 (H803) interacts with FAD. Over residues 833–844 the composition is skewed to pro residues; sequence PRTPPPGGPPPS. Residues R939, Y941, S942, T957, and A959 each coordinate FAD. T1018, R1051, S1080, R1081, K1087, Y1089, and Q1091 together coordinate NADP(+). T1177 is modified (phosphothreonine). S1179 and S1181 each carry phosphoserine.

Belongs to the NOS family. As to quaternary structure, homodimer. Interacts with NOSIP and NOSTRIN. Interacts with HSP90AB1. Forms a complex with ASL, ASS1 and SLC7A1; the complex regulates cell-autonomous L-arginine synthesis and citrulline recycling while channeling extracellular L-arginine to nitric oxide synthesis pathway. The cofactor is heme b. FAD is required as a cofactor. It depends on FMN as a cofactor. (6R)-L-erythro-5,6,7,8-tetrahydrobiopterin serves as cofactor.

The protein localises to the membrane. It localises to the caveola. It is found in the cytoplasm. The protein resides in the cytoskeleton. Its subcellular location is the golgi apparatus. The protein localises to the cell membrane. The enzyme catalyses 2 L-arginine + 3 NADPH + 4 O2 + H(+) = 2 L-citrulline + 2 nitric oxide + 3 NADP(+) + 4 H2O. With respect to regulation, stimulated by calcium/calmodulin. Inhibited by NOSIP and NOSTRIN. Produces nitric oxide (NO) which is implicated in vascular smooth muscle relaxation through a cGMP-mediated signal transduction pathway. NO mediates vascular endothelial growth factor (VEGF)-induced angiogenesis in coronary vessels and promotes blood clotting through the activation of platelets. The protein is Nitric oxide synthase 3 (NOS3) of Ovis aries (Sheep).